Consider the following 153-residue polypeptide: D-aminoacyl-tRNA deacylase (153 aa).

A Gly-cisPro motif, important for rejection of L-amino acids motif is present at residues 137–138 (GP).

Belongs to the DTD family. In terms of assembly, homodimer.

Its subcellular location is the cytoplasm. It carries out the reaction glycyl-tRNA(Ala) + H2O = tRNA(Ala) + glycine + H(+). The catalysed reaction is a D-aminoacyl-tRNA + H2O = a tRNA + a D-alpha-amino acid + H(+). In terms of biological role, an aminoacyl-tRNA editing enzyme that deacylates mischarged D-aminoacyl-tRNAs. Also deacylates mischarged glycyl-tRNA(Ala), protecting cells against glycine mischarging by AlaRS. Acts via tRNA-based rather than protein-based catalysis; rejects L-amino acids rather than detecting D-amino acids in the active site. By recycling D-aminoacyl-tRNA to D-amino acids and free tRNA molecules, this enzyme counteracts the toxicity associated with the formation of D-aminoacyl-tRNA entities in vivo and helps enforce protein L-homochirality. This chain is D-aminoacyl-tRNA deacylase, found in Myxococcus xanthus (strain DK1622).